The chain runs to 126 residues: B3 domain-containing protein At5g54067 (126 aa).

Residues 20 to 118 constitute a DNA-binding region (TF-B3); that stretch reads SDIVGNVVLP…KFVVLNFQYS (99 aa).

Its subcellular location is the nucleus. The chain is B3 domain-containing protein At5g54067 from Arabidopsis thaliana (Mouse-ear cress).